A 424-amino-acid polypeptide reads, in one-letter code: Hemagglutinin-esterase (424 aa).

The signal sequence occupies residues 1–16; the sequence is MFLLPRFVLVSCIIGS. An esterase domain 1 region spans residues 7–127; sequence FVLVSCIIGS…SNDIWMQNKG (121 aa). Residues 17–392 are Virion surface-facing; sequence LGFDNPPTNV…PICVYDPLPI (376 aa). Serine 40 functions as the Nucleophile in the catalytic mechanism. Residues cysteine 44 and cysteine 65 are joined by a disulfide bond. N-linked (GlcNAc...) asparagine; by host glycans are attached at residues asparagine 54, asparagine 89, asparagine 153, asparagine 236, and asparagine 301. 3 cysteine pairs are disulfide-bonded: cysteine 113-cysteine 162, cysteine 197-cysteine 276, and cysteine 205-cysteine 249. Positions 128-266 are receptor binding; that stretch reads LFYTQLYKNM…GNYLAISNEL (139 aa). Residues 267–379 are esterase domain 2; it reads LLTVPTKAIC…RCPTAADINT (113 aa). A disulfide bond links cysteine 307 and cysteine 312. Asparagine 316 is a glycosylation site (N-linked (GlcNAc...) asparagine; by host). Residues aspartate 326 and histidine 329 each act as charge relay system in the active site. A disulfide bridge links cysteine 347 with cysteine 371. Asparagine 358 carries an N-linked (GlcNAc...) asparagine; by host glycan. Residues 393–413 traverse the membrane as a helical segment; it reads ILLGILLGVAVIIIVVLLLYF. The Intravirion portion of the chain corresponds to 414–424; it reads MVDNGTRLHDA. Residue asparagine 417 is glycosylated (N-linked (GlcNAc...) asparagine; by host).

The protein belongs to the influenza type C/coronaviruses hemagglutinin-esterase family. Homodimer; disulfide-linked. Forms a complex with the M protein in the pre-Golgi. Associates then with S-M complex to form a ternary complex S-M-HE. In terms of processing, N-glycosylated in the host RER.

The protein localises to the virion membrane. It is found in the host cell membrane. The catalysed reaction is N-acetyl-9-O-acetylneuraminate + H2O = N-acetylneuraminate + acetate + H(+). It carries out the reaction N-acetyl-4-O-acetylneuraminate + H2O = N-acetylneuraminate + acetate + H(+). Structural protein that makes short spikes at the surface of the virus. Contains receptor binding and receptor-destroying activities. Mediates de-O-acetylation of N-acetyl-4-O-acetylneuraminic acid, which is probably the receptor determinant recognized by the virus on the surface of erythrocytes and susceptible cells. This receptor-destroying activity is important for virus release as it probably helps preventing self-aggregation and ensures the efficient spread of the progeny virus from cell to cell. May serve as a secondary viral attachment protein for initiating infection, the spike protein being the major one. May become a target for both the humoral and the cellular branches of the immune system. The protein is Hemagglutinin-esterase of Bovine coronavirus (strain LSU-94LSS-051) (BCoV-LSU).